We begin with the raw amino-acid sequence, 105 residues long: MIASKFGIGQQVRHKLLGYLGVIIDVDPEYSLEKPSLDDIAADDSLRTAPWYHVVMEDEEGKPVHIYLAEAQLGYESFPVHPEQPTLDELAESIRLQLQAPRLRN.

It belongs to the HspQ family.

Its subcellular location is the cytoplasm. Its function is as follows. Involved in the degradation of certain denaturated proteins, including DnaA, during heat shock stress. The polypeptide is Heat shock protein HspQ (Sodalis glossinidius (strain morsitans)).